We begin with the raw amino-acid sequence, 321 residues long: Digestive cysteine proteinase 3 (321 aa).

The first 16 residues, 1-16 (MKVAALFLCGLALATA), serve as a signal peptide directing secretion. The propeptide at 17 to 106 (SPSWDHFKTQ…AVFTAEAGPM (90 aa)) is activation peptide. 3 cysteine pairs are disulfide-bonded: cysteine 127/cysteine 170, cysteine 161/cysteine 203, and cysteine 261/cysteine 310. Cysteine 130 is a catalytic residue. Residues histidine 268 and asparagine 288 contribute to the active site.

The protein belongs to the peptidase C1 family.

With respect to regulation, inhibited by E-64, antipain, leupeptin, heavy metal ions, iodoacetic acid, dithionitrobenzene, p-hydroxymercuri-benzoate; activated by mercaptoethanol and dithiothreitol. This is Digestive cysteine proteinase 3 (LCP3) from Homarus americanus (American lobster).